The chain runs to 203 residues: Thymidylate kinase (203 aa).

Position 7–14 (7–14 (GGEGAGKT)) interacts with ATP.

It belongs to the thymidylate kinase family.

The enzyme catalyses dTMP + ATP = dTDP + ADP. Phosphorylation of dTMP to form dTDP in both de novo and salvage pathways of dTTP synthesis. The chain is Thymidylate kinase (tmk) from Chlamydia trachomatis serovar D (strain ATCC VR-885 / DSM 19411 / UW-3/Cx).